Reading from the N-terminus, the 344-residue chain is S-methyl-5'-thioadenosine phosphorylase (344 aa).

Residues threonine 45, 88-89, and 121-122 contribute to the phosphate site; these read RH and SA. Residue methionine 238 coordinates substrate. Serine 239 provides a ligand contact to phosphate. Substrate is bound at residue 262–264; it reads DYD.

This sequence belongs to the PNP/MTAP phosphorylase family. MTAP subfamily. In terms of assembly, homotrimer.

Its subcellular location is the cytoplasm. The protein resides in the nucleus. The enzyme catalyses S-methyl-5'-thioadenosine + phosphate = 5-(methylsulfanyl)-alpha-D-ribose 1-phosphate + adenine. It participates in amino-acid biosynthesis; L-methionine biosynthesis via salvage pathway; S-methyl-5-thio-alpha-D-ribose 1-phosphate from S-methyl-5'-thioadenosine (phosphorylase route): step 1/1. Its function is as follows. Catalyzes the reversible phosphorylation of S-methyl-5'-thioadenosine (MTA) to adenine and 5-methylthioribose-1-phosphate. Involved in the breakdown of MTA, a major by-product of polyamine biosynthesis. Responsible for the first step in the methionine salvage pathway after MTA has been generated from S-adenosylmethionine. Has broad substrate specificity with 6-aminopurine nucleosides as preferred substrates. The chain is S-methyl-5'-thioadenosine phosphorylase from Candida albicans (strain WO-1) (Yeast).